The sequence spans 268 residues: MLDWNPALYLRFANERTRPAAELLARVPLAQARHVVDLGCGPGNSTELLAQRYAGATITGIDNSQAMLATARQHLPEARFTLADIASWTPAPGESAPDLIYANASLQWVGEHETLIPRLFAQLAPGGVLAIQMPDNRQEATHRVMREIASLPKFAAYIGDAAKVRADILPIRSYYDLLAGPQEQAGVEAGAVDVWHTVYQHPMDSAGAIVQWLRGTGLKPFVEGLPEALQADFLTEYENRVDAAYGVRADGRRLLAFPRLFIVAQRKP.

Belongs to the methyltransferase superfamily. Tam family.

The protein localises to the cytoplasm. It catalyses the reaction trans-aconitate + S-adenosyl-L-methionine = (E)-3-(methoxycarbonyl)pent-2-enedioate + S-adenosyl-L-homocysteine. Functionally, catalyzes the S-adenosylmethionine monomethyl esterification of trans-aconitate. The protein is Trans-aconitate 2-methyltransferase of Delftia acidovorans (strain DSM 14801 / SPH-1).